The chain runs to 331 residues: (E)-beta farnesene synthase MBR_03882 (331 aa).

This sequence belongs to the trichodiene synthase family.

The catalysed reaction is (2E,6E)-farnesyl diphosphate = (E)-beta-farnesene + diphosphate. Its function is as follows. Terpene synthase that catalyzes the conversion of (2E,6E)-farnesyl diphosphate (FPP) into the volatile sesquiterpene (E)-beta-farnesene. This Metarhizium brunneum (strain ARSEF 3297) protein is (E)-beta farnesene synthase MBR_03882.